A 535-amino-acid chain; its full sequence is Xylan 1,3-beta-xylosidase (535 aa).

The active-site Proton acceptor is the Asp-16. The active-site Proton donor is Glu-189.

It belongs to the glycosyl hydrolase 43 family.

The catalysed reaction is Hydrolysis of successive xylose residues from the non-reducing termini of (1-&gt;3)-beta-D-xylans.. With respect to regulation, inhibited by Ag(+), Cu(2+), Hg(2+), Mn(2+), Pb(2+), Zn(2+) and p-chloromercuric benzoic acid. In terms of biological role, beta-1,3-xylosidase that hydrolyzes beta-1,3-xylooligosaccharides to D-xylose. This Vibrio sp protein is Xylan 1,3-beta-xylosidase (xloA).